A 283-amino-acid chain; its full sequence is Short-chain dehydrogenase anuB (283 aa).

Positions 57, 78, 106, 166, 170, 199, and 201 each coordinate NADP(+). The active-site Proton acceptor is the Y166. The active-site Proton donor is the Y166. The active-site Lowers pKa of active site Tyr is the K170.

This sequence belongs to the short-chain dehydrogenases/reductases (SDR) family.

The protein operates within secondary metabolite biosynthesis. In terms of biological role, highly reducing polyketide synthase; part of the gene cluster that mediates the biosynthesis of annullatin D, an alkylated aromatic polyketide with a fused dihydrobenzofuran lactone ring system that exhibits potent agonistic activities toward the cannabinoid receptors. The annullatin backbone 2-hydroxymethyl-3-pentylphenol is assembled from one acetyl-CoA starter unit and 5 malonyl-CoA elongation units by cooperation of the highly reducing polyketide synthase anuA, the short-chain dehydrogenase anuB and the oxidoreductase anuC, before being hydroxylated at the C-5 alkyl chain by the cytochrome P450 monooxygenase anuE to form (8S)-annullatin E. The prenyltransferase anuH subsequently installs one isoprenyl group at the benzene ring to form (8S)-annullatin J. Enzymatic or nonenzymatic dihydro-benzofuran ring formation between the prenyl and the phenolic hydroxyl groups in (8S)-annullatin J results in two diastereomers (2S,9S)-annullatin H and compound 12. The intermediate (2S,9S)-annullatin H is then converted to (2S,9S)-annullatin D by the FAD-linked oxidoreductase anuG-catalyzed five-member lactone ring formation. The isomer 12 acts as a substrate for the short-chain dehydrogenase anuF and is oxidized to (2R)-annullatin F, which is subsequently acetylated by an acetyltransferase leading to (2R)-annullatin G formation. The remaining enzymes identified within the cluster, anuD, anuI and anuJ, seem not to be involved in annullatin biosynthesis. This is Short-chain dehydrogenase anuB from Penicillium roqueforti (strain FM164).